The following is a 303-amino-acid chain: MFGKKNLKWLGVVATLMMTFVQLGGALVTKTGSADGCGSSWPLCHGALIPEFFPIDTIIELSHRAVSALSLLMVLWLVITAWKHIGYIKEIKPLSIISVGFLLLQALIGAAAVIWQQNDYVLALHFGISLISFSSVFLITLIIFSIDQKYEADELYIKKPLRRLTWLMAIIIYCGVYTGALVRHADASLAYGGWPLPFHDLVPHSEQDWVQLTHRIMAFIVFTIIMITYIHAVKNYPNNRTVHYGYTAAFILVILQVITGALSIMTNVNLLIALFHALFITYLFGMTTYFIMLMLRSVRSDKQ.

The Cytoplasmic segment spans residues 1-8 (MFGKKNLK). A helical membrane pass occupies residues 9–29 (WLGVVATLMMTFVQLGGALVT). The Extracellular segment spans residues 30-67 (KTGSADGCGSSWPLCHGALIPEFFPIDTIIELSHRAVS). Residues Cys37 and Cys44 are joined by a disulfide bond. Glu60 is an active-site residue. Position 63 (His63) interacts with heme o. Residues 68–88 (ALSLLMVLWLVITAWKHIGYI) form a helical membrane-spanning segment. The Cytoplasmic portion of the chain corresponds to 89–93 (KEIKP). The helical transmembrane segment at 94 to 114 (LSIISVGFLLLQALIGAAAVI) threads the bilayer. Residues 115 to 125 (WQQNDYVLALH) lie on the Extracellular side of the membrane. His125 lines the heme o pocket. A helical membrane pass occupies residues 126 to 146 (FGISLISFSSVFLITLIIFSI). At 147-163 (DQKYEADELYIKKPLRR) the chain is on the cytoplasmic side. Residues 164–184 (LTWLMAIIIYCGVYTGALVRH) form a helical membrane-spanning segment. The Extracellular segment spans residues 185 to 215 (ADASLAYGGWPLPFHDLVPHSEQDWVQLTHR). His214 lines the heme b pocket. Residues 216-236 (IMAFIVFTIIMITYIHAVKNY) form a helical membrane-spanning segment. Residues 237–244 (PNNRTVHY) are Cytoplasmic-facing. A helical membrane pass occupies residues 245–265 (GYTAAFILVILQVITGALSIM). At 266-270 (TNVNL) the chain is on the extracellular side. Residues 271-291 (LIALFHALFITYLFGMTTYFI) form a helical membrane-spanning segment. Heme b is bound at residue His276. Topologically, residues 292 to 303 (MLMLRSVRSDKQ) are cytoplasmic.

It belongs to the COX15/CtaA family. Type 1 subfamily. As to quaternary structure, interacts with CtaB. The cofactor is heme b.

The protein resides in the cell membrane. It catalyses the reaction Fe(II)-heme o + 2 A + H2O = Fe(II)-heme a + 2 AH2. Its pathway is porphyrin-containing compound metabolism; heme A biosynthesis; heme A from heme O: step 1/1. Its function is as follows. Catalyzes the conversion of heme O to heme A by two successive hydroxylations of the methyl group at C8. The first hydroxylation forms heme I, the second hydroxylation results in an unstable dihydroxymethyl group, which spontaneously dehydrates, resulting in the formyl group of heme A. The polypeptide is Heme A synthase (Staphylococcus aureus (strain MSSA476)).